We begin with the raw amino-acid sequence, 200 residues long: Diadenylate cyclase (200 aa).

A helical transmembrane segment spans residues 5-25; the sequence is ILLFITLIFLLLLFVFLIAFA. In terms of domain architecture, DAC spans 28 to 185; sequence NKRVRNYVVR…KGVIKTLSSN (158 aa).

It belongs to the adenylate cyclase family. DacB/CdaS subfamily. In terms of assembly, probably oligomerizes.

It localises to the cell membrane. It carries out the reaction 2 ATP = 3',3'-c-di-AMP + 2 diphosphate. In terms of biological role, catalyzes the condensation of 2 ATP molecules into cyclic di-AMP (c-di-AMP), a second messenger used to regulate differing processes in different bacteria. This chain is Diadenylate cyclase, found in Mycoplasma genitalium (strain ATCC 33530 / DSM 19775 / NCTC 10195 / G37) (Mycoplasmoides genitalium).